The primary structure comprises 712 residues: Probable metal-nicotianamine transporter YSL11 (712 aa).

Residues 25 to 48 (RRNTTAAARGNAGEEEEEAEAVAP) form a disordered region. The next 14 membrane-spanning stretches (helical) occupy residues 70–90 (AFVV…KLSL), 93–113 (GVIP…VRLW), 138–158 (CVVS…LFGM), 180–200 (LGWI…ALVP), 242–262 (LGKY…YTAG), 300–320 (IVNV…WPLI), 345–365 (VFIT…KVFG), 418–438 (VAIG…PLII), 446–466 (ILIA…GSGL), 478–498 (LAIF…LVGL), 532–552 (FVSQ…VFWL), 593–613 (LTLC…KDLV), 631–651 (FYLG…LYFW), and 666–686 (VASG…VLSL).

It belongs to the YSL (TC 2.A.67.2) family.

Its subcellular location is the membrane. Functionally, may be involved in the transport of nicotianamine-chelated metals. This is Probable metal-nicotianamine transporter YSL11 (YSL11) from Oryza sativa subsp. japonica (Rice).